The sequence spans 137 residues: Large ribosomal subunit protein uL16 (137 aa).

It belongs to the universal ribosomal protein uL16 family. In terms of assembly, part of the 50S ribosomal subunit.

Its function is as follows. Binds 23S rRNA and is also seen to make contacts with the A and possibly P site tRNAs. This Endomicrobium trichonymphae protein is Large ribosomal subunit protein uL16.